A 142-amino-acid chain; its full sequence is Prefoldin subunit alpha 1 (142 aa).

The protein belongs to the prefoldin subunit alpha family. In terms of assembly, heterohexamer of two alpha and four beta subunits.

The protein localises to the cytoplasm. Molecular chaperone capable of stabilizing a range of proteins. Seems to fulfill an ATP-independent, HSP70-like function in archaeal de novo protein folding. This chain is Prefoldin subunit alpha 1 (pfdA1), found in Methanocaldococcus jannaschii (strain ATCC 43067 / DSM 2661 / JAL-1 / JCM 10045 / NBRC 100440) (Methanococcus jannaschii).